The primary structure comprises 150 residues: L-alanine exporter AlaE (150 aa).

The next 4 helical transmembrane spans lie at 17–37, 48–68, 86–106, and 111–131; these read FAMVVFCFITGMFIEILISGM, LSIPVNIAIAWPYGVFRDFML, LVAYVTFQSPAYAMILLVVGA, and IITAVSSNVVVSCVMGVFYGY.

This sequence belongs to the AlaE exporter family.

It is found in the cell inner membrane. In terms of biological role, exports L-alanine. This Aliivibrio fischeri (strain ATCC 700601 / ES114) (Vibrio fischeri) protein is L-alanine exporter AlaE.